Reading from the N-terminus, the 374-residue chain is S-adenosylmethionine:tRNA ribosyltransferase-isomerase (374 aa).

Belongs to the QueA family. In terms of assembly, monomer.

The protein localises to the cytoplasm. It carries out the reaction 7-aminomethyl-7-carbaguanosine(34) in tRNA + S-adenosyl-L-methionine = epoxyqueuosine(34) in tRNA + adenine + L-methionine + 2 H(+). It functions in the pathway tRNA modification; tRNA-queuosine biosynthesis. Functionally, transfers and isomerizes the ribose moiety from AdoMet to the 7-aminomethyl group of 7-deazaguanine (preQ1-tRNA) to give epoxyqueuosine (oQ-tRNA). The chain is S-adenosylmethionine:tRNA ribosyltransferase-isomerase from Prochlorococcus marinus (strain AS9601).